The following is a 621-amino-acid chain: Glutathione-regulated potassium-efflux system protein KefC (621 aa).

12 consecutive transmembrane segments (helical) span residues 9-29 (ALIYLGAAALIVPIASVLGLG), 30-50 (SVLGYLIAGCIIGPWALRLVN), 54-74 (AILHFAEIGVVLMLVAMGLEL), 90-110 (GALQMVACGVLIGLFCMLLGL), 114-134 (VAELIGMTLALSSTAIAMQAM), 149-169 (FAVLLFQDIAAIPLVAMIPLL), 178-198 (LMAFALSALKVAAALALVVVL), 232-252 (LLLEEVGLSMAMGAFLAGVLL), 270-290 (GLLLGLFFIGVGMSIDFAPWS), 296-316 (IVILLVGFPAIKMLMLWLIAQ), 326-346 (RWFAVLLGQGSEFAFVVFGPA), and 359-379 (ALTLAVALSMATTPILLVLLT). The 120-residue stretch at 399 to 518 (QPRVIVAGFG…AGVEAPERET (120 aa)) folds into the RCK N-terminal domain. Positions 598 to 621 (GWQGTEEGRHTGDIADEPENKPSA) are disordered.

It belongs to the monovalent cation:proton antiporter 2 (CPA2) transporter (TC 2.A.37) family. KefC subfamily. In terms of assembly, homodimer. Interacts with the regulatory subunit KefF.

The protein resides in the cell inner membrane. Its function is as follows. Pore-forming subunit of a potassium efflux system that confers protection against electrophiles. Catalyzes K(+)/H(+) antiport. The polypeptide is Glutathione-regulated potassium-efflux system protein KefC (Klebsiella aerogenes (Enterobacter aerogenes)).